The primary structure comprises 247 residues: Sugar fermentation stimulation protein homolog (247 aa).

The protein belongs to the SfsA family.

This chain is Sugar fermentation stimulation protein homolog, found in Aeromonas hydrophila subsp. hydrophila (strain ATCC 7966 / DSM 30187 / BCRC 13018 / CCUG 14551 / JCM 1027 / KCTC 2358 / NCIMB 9240 / NCTC 8049).